A 182-amino-acid chain; its full sequence is Adenylate kinase isoenzyme 6 homolog (182 aa).

A disordered region spans residues 1–20 (MATPETRRRPNILVTGSPGT). Positions 19, 21, 22, 23, and 24 each coordinate ATP. Residues 39-62 (EVSKEVRENNLQGDFDEQYNCHVL) are NMPbind. The tract at residues 116–126 (SRGYSEFKIKE) is LID. Arg117 contacts ATP.

The protein belongs to the adenylate kinase family. AK6 subfamily. In terms of assembly, monomer and homodimer. Interacts with small ribosomal subunit protein uS11. Not a structural component of 43S pre-ribosomes, but transiently interacts with them by binding to uS11.

It localises to the cytoplasm. The protein resides in the nucleus. The enzyme catalyses AMP + ATP = 2 ADP. The catalysed reaction is ATP + H2O = ADP + phosphate + H(+). Broad-specificity nucleoside monophosphate (NMP) kinase that catalyzes the reversible transfer of the terminal phosphate group between nucleoside triphosphates and monophosphates. Also has ATPase activity. Involved in the late cytoplasmic maturation steps of the 40S ribosomal particles, specifically 18S rRNA maturation. While NMP activity is not required for ribosome maturation, ATPase activity is. Associates transiently with small ribosomal subunit protein uS11. ATP hydrolysis breaks the interaction with uS11. May temporarily remove uS11 from the ribosome to enable a conformational change of the ribosomal RNA that is needed for the final maturation step of the small ribosomal subunit. Its NMP activity may have a role in nuclear energy homeostasis. AMP and dAMP are the preferred substrates, but CMP and TMP are also good substrates. ATP and dATP are the best phosphate donors. This chain is Adenylate kinase isoenzyme 6 homolog, found in Caenorhabditis elegans.